Reading from the N-terminus, the 210-residue chain is HTH-type transcriptional regulator MtrR (210 aa).

One can recognise an HTH tetR-type domain in the interval 9-69; it reads LKTKEHLMLA…ALFQRICDDI (61 aa). A DNA-binding region (H-T-H motif) is located at residues 32-51; it reads SLNEIAQAAGVTRGALYWHF.

In terms of assembly, homodimer. Binds to DNA as a pair of dimers.

With respect to regulation, DNA binding is affected significantly by increasing the NaCl concentration. In terms of biological role, controls the permeability of the cell envelope to hydrophobic compounds such as antibiotics and detergents. Represses transcription of the mtrCDE-encoded efflux pump by binding within the mtrCDE promoter. Also negatively regulates the expression of farR, by binding to its promoter region, leading indirectly to the positive regulation of expression of the farAB-encoded efflux pump. This Neisseria gonorrhoeae protein is HTH-type transcriptional regulator MtrR.